The chain runs to 251 residues: 14-3-3-like protein (251 aa).

The protein belongs to the 14-3-3 family.

The protein is 14-3-3-like protein of Fucus vesiculosus (Bladder wrack).